Reading from the N-terminus, the 325-residue chain is D-alanine--D-alanine ligase (325 aa).

An ATP-grasp domain is found at Lys-102–Gln-300. ATP is bound at residue Ala-130–Thr-185. Mg(2+) is bound by residues Asp-254, Glu-267, and Asn-269.

This sequence belongs to the D-alanine--D-alanine ligase family. The cofactor is Mg(2+). It depends on Mn(2+) as a cofactor.

The protein resides in the cytoplasm. The catalysed reaction is 2 D-alanine + ATP = D-alanyl-D-alanine + ADP + phosphate + H(+). It functions in the pathway cell wall biogenesis; peptidoglycan biosynthesis. Cell wall formation. This is D-alanine--D-alanine ligase from Synechococcus sp. (strain JA-2-3B'a(2-13)) (Cyanobacteria bacterium Yellowstone B-Prime).